The chain runs to 501 residues: MKFKADEISSIIKERIEKFDFNLEIEETGKIISVADGVAKVYGLKNAMAGEMVEFENGEKGMVLNLEESSVGIVILGKGLGLKEGSSVKRLKKLLKVPVGDALIGRVVNALGEPIDAKGVIEASEYRFVEEKAKGIMARKSVHEPLHTGIKAIDALVPIGRGQRELIIGDRQTGKTTVAIDTIISQKGKDVICIYVAIGQKQSTVAQVVKKLEEYGAMDYTIVVNAGASDPAALQYLAPYAGVTMGEYFRDNSRHALIVYDDLSKHAVAYREMSLILRRPPGREAYPGDVFYLHSRLLERASKLSDELGAGSLTALPIIETQAGDVSAYIPTNVISITDGQIFLETDLFNSGIRPAINVGLSVSRVGGAAQIKATKQVSGTLRLDLAQYRELQAFAQFASDLDEASRKQLERGQRMVEVLKQPPYSPLSPENQVVIIFAGTKGYLDDVAVSKIGEFEAALYPFIEAKYPEIFEQIRTKKALDKDLEEKLAKALSEFKANHI.

Residue 169–176 participates in ATP binding; that stretch reads GDRQTGKT.

Belongs to the ATPase alpha/beta chains family. As to quaternary structure, F-type ATPases have 2 components, CF(1) - the catalytic core - and CF(0) - the membrane proton channel. CF(1) has five subunits: alpha(3), beta(3), gamma(1), delta(1), epsilon(1). CF(0) has three main subunits: a(1), b(2) and c(9-12). The alpha and beta chains form an alternating ring which encloses part of the gamma chain. CF(1) is attached to CF(0) by a central stalk formed by the gamma and epsilon chains, while a peripheral stalk is formed by the delta and b chains.

The protein localises to the cell inner membrane. It carries out the reaction ATP + H2O + 4 H(+)(in) = ADP + phosphate + 5 H(+)(out). Functionally, produces ATP from ADP in the presence of a proton gradient across the membrane. The alpha chain is a regulatory subunit. The sequence is that of ATP synthase subunit alpha from Campylobacter lari (strain RM2100 / D67 / ATCC BAA-1060).